The sequence spans 128 residues: UPF0102 protein BCG_2919c (128 aa).

Belongs to the UPF0102 family.

The polypeptide is UPF0102 protein BCG_2919c (Mycobacterium bovis (strain BCG / Pasteur 1173P2)).